The primary structure comprises 82 residues: Putative membrane protein insertion efficiency factor (82 aa).

It belongs to the UPF0161 family.

It is found in the cell inner membrane. Functionally, could be involved in insertion of integral membrane proteins into the membrane. The protein is Putative membrane protein insertion efficiency factor of Rickettsia typhi (strain ATCC VR-144 / Wilmington).